The following is a 664-amino-acid chain: Translation factor GUF1, mitochondrial (664 aa).

One can recognise a tr-type G domain in the interval 63–246; sequence SNYRNFSIVA…SIINNIPPPQ (184 aa). GTP is bound by residues 72 to 79, 139 to 143, and 193 to 196; these read AHVDHGKS, DTPGH, and NKID.

This sequence belongs to the TRAFAC class translation factor GTPase superfamily. Classic translation factor GTPase family. LepA subfamily.

The protein resides in the mitochondrion inner membrane. It catalyses the reaction GTP + H2O = GDP + phosphate + H(+). Functionally, promotes mitochondrial protein synthesis. May act as a fidelity factor of the translation reaction, by catalyzing a one-codon backward translocation of tRNAs on improperly translocated ribosomes. Binds to mitochondrial ribosomes in a GTP-dependent manner. The sequence is that of Translation factor GUF1, mitochondrial from Clavispora lusitaniae (strain ATCC 42720) (Yeast).